The chain runs to 250 residues: uncharacterized protein (250 aa).

The signal sequence occupies residues 1–24 (MKGFLKPNFSLGALFLTLSPIATA). Residue Cys-25 is the site of N-palmitoyl cysteine attachment. Cys-25 is lipidated: S-diacylglycerol cysteine. The 157-residue stretch at 44 to 200 (RLRKARVNHW…FNNRKNIFSY (157 aa)) folds into the TNase-like domain.

The protein resides in the cell membrane. This is an uncharacterized protein from Mycoplasma genitalium (strain ATCC 33530 / DSM 19775 / NCTC 10195 / G37) (Mycoplasmoides genitalium).